We begin with the raw amino-acid sequence, 49 residues long: IgW transmembrane form Tm2T7/Tm7T7/Tm3T3 (49 aa).

Asn-3 carries N-linked (GlcNAc...) asparagine glycosylation. A helical membrane pass occupies residues 25 to 45 (VAAFAILFILSFLYSTFVTVV).

In terms of tissue distribution, expressed in the spleen. May also be expressed in other lymphoid tissues.

Its subcellular location is the membrane. The polypeptide is IgW transmembrane form Tm2T7/Tm7T7/Tm3T3 (Heterodontus francisci (Horn shark)).